The sequence spans 226 residues: Ribonuclease HII (226 aa).

An RNase H type-2 domain is found at 24-216 (QRLCGVDEAG…VRKVLERGMV (193 aa)). 3 residues coordinate a divalent metal cation: Asp30, Glu31, and Asp125.

It belongs to the RNase HII family. Mn(2+) serves as cofactor. Mg(2+) is required as a cofactor.

Its subcellular location is the cytoplasm. It carries out the reaction Endonucleolytic cleavage to 5'-phosphomonoester.. In terms of biological role, endonuclease that specifically degrades the RNA of RNA-DNA hybrids. The sequence is that of Ribonuclease HII from Cupriavidus metallidurans (strain ATCC 43123 / DSM 2839 / NBRC 102507 / CH34) (Ralstonia metallidurans).